A 463-amino-acid chain; its full sequence is L-cystine uptake protein TcyP (463 aa).

10 helical membrane-spanning segments follow: residues 3-23 (TLLV…LFVM), 34-54 (VFTA…IYGP), 73-93 (YVKL…LGAF), 105-125 (ISGL…AVGI), 184-204 (PTST…FLGV), 225-245 (IVMR…LAIM), 262-282 (MFVI…LLLL), 338-358 (LSIG…MMIA), 369-389 (VFII…AGVG), and 394-414 (FAAL…GLLI).

It belongs to the dicarboxylate/amino acid:cation symporter (DAACS) (TC 2.A.23) family.

It is found in the cell membrane. Functionally, mediates uptake of L-cystine, the oxidized form of L-cysteine. Although it is more specific for L-cystine, it could also transport a much broader range of amino acids and sulfur compounds including S-methylcysteine. The chain is L-cystine uptake protein TcyP (tcyP) from Bacillus subtilis (strain 168).